The following is a 216-amino-acid chain: uncharacterized protein (216 aa).

The helical transmembrane segment at 5-22 (LGLVFGSVILIYLISLFL) threads the bilayer.

It is found in the membrane. This is an uncharacterized protein from Aquifex aeolicus (strain VF5).